A 257-amino-acid polypeptide reads, in one-letter code: AN1-type zinc finger protein 2B (257 aa).

2 consecutive AN1-type zinc fingers follow at residues 4 to 52 (PDLG…QKDI) and 94 to 142 (KIFT…HPTS). The Zn(2+) site is built by C10, C15, C25, C28, C33, H36, H42, C44, C100, C105, C115, C118, C123, H126, H132, and C134. Residues 141-151 (TSRAGLAAISR) form a VCP/p97-interacting motif (VIM) region. Positions 153-187 (QAVASTSTVPSPSQTMPSCTSPSRATTRSPSWTAP) are disordered. The span at 155-171 (VASTSTVPSPSQTMPSC) shows a compositional bias: polar residues. S163 and S173 each carry phosphoserine. Low complexity predominate over residues 172–186 (TSPSRATTRSPSWTA). UIM domains lie at 197–216 (SEDE…TKPQ) and 221–240 (QEEE…AEYQ). The residue at position 254 (C254) is a Cysteine methyl ester. The S-geranylgeranyl cysteine moiety is linked to residue C254. Positions 254–257 (CSLC) match the CAAX motif motif. Positions 255–257 (SLC) are cleaved as a propeptide — removed in mature form.

As to quaternary structure, binds 'Lys-48'-linked polyubiquitin chains of ubiquitinated proteins. Associates with the proteasome complex; upon exposure to arsenite. Interacts (via VIM motif) with VCP; the interaction is direct. Interacts with BAG6. Interacts with IGF1R (nascent precursor form). Interacts with DERL1, FAF2, NPLOC4 and UFD1; probably through VCP. In terms of processing, phosphorylated by MAPK14. Phosphorylation has no effect on association with the proteasome complex.

It localises to the endoplasmic reticulum membrane. Its function is as follows. Plays a role in protein homeostasis by regulating both the translocation and the ubiquitin-mediated proteasomal degradation of nascent proteins at the endoplasmic reticulum. It is involved in the regulation of signal-mediated translocation of proteins into the endoplasmic reticulum. It also plays a role in the ubiquitin-mediated proteasomal degradation of proteins for which signal-mediated translocation to the endoplasmic reticulum has failed. May therefore function in the endoplasmic reticulum stress-induced pre-emptive quality control, a mechanism that selectively attenuates the translocation of newly synthesized proteins into the endoplasmic reticulum and reroutes them to the cytosol for proteasomal degradation. By controlling the steady-state expression of the IGF1R receptor, indirectly regulates the insulin-like growth factor receptor signaling pathway. This is AN1-type zinc finger protein 2B from Homo sapiens (Human).